The following is a 126-amino-acid chain: Fluoride-specific ion channel FluC (126 aa).

The next 4 helical transmembrane spans lie at 4–24 (FAIL…RYLV), 38–58 (YGTL…IAAF), 71–91 (IIGL…MDNV), and 104–124 (LNVV…FQLL). 2 residues coordinate Na(+): Gly78 and Thr81.

Belongs to the fluoride channel Fluc/FEX (TC 1.A.43) family.

Its subcellular location is the cell inner membrane. The catalysed reaction is fluoride(in) = fluoride(out). Na(+) is not transported, but it plays an essential structural role and its presence is essential for fluoride channel function. Functionally, fluoride-specific ion channel. Important for reducing fluoride concentration in the cell, thus reducing its toxicity. The polypeptide is Fluoride-specific ion channel FluC (Vibrio vulnificus (strain CMCP6)).